An 801-amino-acid polypeptide reads, in one-letter code: Cation/H(+) antiporter 7 (801 aa).

Helical transmembrane passes span 58–78 (PNLE…EILF), 83–103 (IPIP…LFSY), 128–148 (GAFG…VGML), 154–174 (RAAL…YILM), 192–212 (EIIL…LTDL), 223–243 (VQSC…GTVL), 254–274 (IVIV…MLWI), 287–307 (VYIY…LNFF), 312–332 (YGWF…SALI), 340–360 (VGVL…ISWL), 377–397 (AISV…ITAF), 407–427 (IVLA…LGYI), and 438–458 (FTIA…AIEF).

The protein belongs to the monovalent cation:proton antiporter 2 (CPA2) transporter (TC 2.A.37) family. CHX (TC 2.A.37.4) subfamily. Expressed in pollen.

The protein localises to the membrane. Its function is as follows. May operate as a cation/H(+) antiporter. The sequence is that of Cation/H(+) antiporter 7 (CHX7) from Arabidopsis thaliana (Mouse-ear cress).